A 310-amino-acid chain; its full sequence is Tyrosine recombinase XerC (310 aa).

The region spanning 22–103 (SQMLEAIEDF…SVKSFSTWAV (82 aa)) is the Core-binding (CB) domain. The region spanning 124–304 (NLPRVLGEVQ…SSQRLLEAFR (181 aa)) is the Tyr recombinase domain. Catalysis depends on residues Arg-165, Lys-189, His-256, Arg-259, and His-282. The active-site O-(3'-phospho-DNA)-tyrosine intermediate is the Tyr-291.

Belongs to the 'phage' integrase family. XerC subfamily. In terms of assembly, forms a cyclic heterotetrameric complex composed of two molecules of XerC and two molecules of XerD.

It localises to the cytoplasm. In terms of biological role, site-specific tyrosine recombinase, which acts by catalyzing the cutting and rejoining of the recombining DNA molecules. The XerC-XerD complex is essential to convert dimers of the bacterial chromosome into monomers to permit their segregation at cell division. It also contributes to the segregational stability of plasmids. This chain is Tyrosine recombinase XerC, found in Corynebacterium efficiens (strain DSM 44549 / YS-314 / AJ 12310 / JCM 11189 / NBRC 100395).